A 102-amino-acid chain; its full sequence is uncharacterized protein (102 aa).

Residues 29-52 (IGSTYFCFGGAIFILVAPLTNLVY) form a helical membrane-spanning segment.

The protein resides in the membrane. This is an uncharacterized protein from Saccharomyces cerevisiae (strain ATCC 204508 / S288c) (Baker's yeast).